A 507-amino-acid chain; its full sequence is ATP synthase subunit alpha, plastid (507 aa).

G170–T177 contributes to the ATP binding site.

It belongs to the ATPase alpha/beta chains family. F-type ATPases have 2 components, CF(1) - the catalytic core - and CF(0) - the membrane proton channel. CF(1) has five subunits: alpha(3), beta(3), gamma(1), delta(1), epsilon(1). CF(0) has four main subunits: a, b, b' and c.

Its subcellular location is the plastid membrane. The catalysed reaction is ATP + H2O + 4 H(+)(in) = ADP + phosphate + 5 H(+)(out). Its function is as follows. Produces ATP from ADP in the presence of a proton gradient across the membrane. The alpha chain is a regulatory subunit. The chain is ATP synthase subunit alpha, plastid from Aneura mirabilis (Parasitic liverwort).